The chain runs to 537 residues: Actin-histidine N-methyltransferase (537 aa).

Basic residues predominate over residues 1–12; it reads MGKNTKRNKKTK. The interval 1 to 50 is disordered; it reads MGKNTKRNKKTKQQQQQPQQNGVTASASGTAVEDFEDQQAASSLPSLNGK. S-adenosyl-L-methionine contacts are provided by residues Arg-114, 143 to 145, Arg-299, 325 to 329, and 375 to 377; these read YQL, DMANH, and NGF. The 232-residue stretch at 133 to 364 folds into the SET domain; it reads EGLEIAIFPG…TGEQFFIYYG (232 aa).

This sequence belongs to the class V-like SAM-binding methyltransferase superfamily. SETD3 actin-histidine methyltransferase family.

The protein localises to the cytoplasm. Its subcellular location is the nucleus. It catalyses the reaction L-histidyl-[protein] + S-adenosyl-L-methionine = N(tele)-methyl-L-histidyl-[protein] + S-adenosyl-L-homocysteine + H(+). Protein-histidine N-methyltransferase that specifically mediates 3-methylhistidine (tele-methylhistidine) methylation of actin at 'His-74'. This Drosophila melanogaster (Fruit fly) protein is Actin-histidine N-methyltransferase.